The primary structure comprises 447 residues: MTKKIIALVGRPNVGKSTLFNRLSIRKKAIVHDLPGITRDRKYTDGKIGSFEFLLIDTPGLEENHDSMGARLMEQTTKAILEADLICFMVDGRSGILPNDKLLGSFVRKYNKPAILVVNKCEKAFDFDKEYYKLGFDSMVTISAEHGTGLIDLYDEIITKLPEEESIETNIADPIKGDYLQIVVSGRPNAGKSTFINALINDERLLTGPEAGITRESIEIDWHYKNNHIKLIDTAGLRKKSTITESLEKLSASDAINSIKFANTVILMIDALAPLKQQDLNIASHVVNEGRGIVIVVNKWDLVKESKKEAFQEEFYYQINTHLPQVKGVPVLFISAINKQNIEQVLDSCLKIYKIWNKKIATSKLNEWLNFTTEAHPLPLQKGGRRVRVKYMTQTKTRPPTFKLFSNNPEKITDSYTRYLVNNMRDAFDMPGIPIRFTYVKTKNPYV.

2 EngA-type G domains span residues 4-165 (KIIA…PEEE) and 180-357 (LQIV…KIWN). GTP-binding positions include 10–17 (GRPNVGKS), 57–61 (DTPGL), 119–122 (NKCE), 186–193 (GRPNAGKS), 233–237 (DTAGL), and 298–301 (NKWD). Positions 358–443 (KKIATSKLNE…PIRFTYVKTK (86 aa)) constitute a KH-like domain.

This sequence belongs to the TRAFAC class TrmE-Era-EngA-EngB-Septin-like GTPase superfamily. EngA (Der) GTPase family. Associates with the 50S ribosomal subunit.

GTPase that plays an essential role in the late steps of ribosome biogenesis. In Rickettsia akari (strain Hartford), this protein is GTPase Der.